The primary structure comprises 397 residues: 2-aminoadipate transaminase (397 aa).

Substrate is bound at residue glycine 40. Pyridoxal 5'-phosphate contacts are provided by residues tyrosine 70, 100–101 (SQ), asparagine 174, 202–205 (DDAY), 235–237 (SFS), and arginine 245. Asparagine 174 is a binding site for substrate. N6-(pyridoxal phosphate)lysine is present on lysine 263. A substrate-binding site is contributed by arginine 368.

Belongs to the class-I pyridoxal-phosphate-dependent aminotransferase family. Homodimer. It depends on pyridoxal 5'-phosphate as a cofactor.

The catalysed reaction is L-2-aminoadipate + 2-oxoglutarate = 2-oxoadipate + L-glutamate. It functions in the pathway amino-acid biosynthesis; L-lysine biosynthesis via AAA pathway; L-alpha-aminoadipate from 2-oxoglutarate: step 5/5. Functionally, catalyzes the transfer of an amino group between 2-oxoadipate (2-OA) and glutamate (Glu) to yield alpha-aminodipate (AAA). It can also transaminate glutamate, leucine, and aromatic amino acids. It also contributes in the biosynthesis of other amino acids such as leucine. The chain is 2-aminoadipate transaminase (lysN) from Thermus thermophilus (strain ATCC BAA-163 / DSM 7039 / HB27).